The sequence spans 305 residues: Oxygen-dependent coproporphyrinogen-III oxidase (305 aa).

Ser92 lines the substrate pocket. The a divalent metal cation site is built by His96 and His106. The active-site Proton donor is His106. 108–110 (NVR) is a substrate binding site. A divalent metal cation contacts are provided by His145 and His175. Residues 239–274 (YVEFNLLFDRGTLFGLQSGGRAESILISLPPLVRWE) are important for dimerization. 257–259 (GGR) provides a ligand contact to substrate.

This sequence belongs to the aerobic coproporphyrinogen-III oxidase family. In terms of assembly, homodimer. A divalent metal cation is required as a cofactor.

It is found in the cytoplasm. The enzyme catalyses coproporphyrinogen III + O2 + 2 H(+) = protoporphyrinogen IX + 2 CO2 + 2 H2O. The protein operates within porphyrin-containing compound metabolism; protoporphyrin-IX biosynthesis; protoporphyrinogen-IX from coproporphyrinogen-III (O2 route): step 1/1. Involved in the heme biosynthesis. Catalyzes the aerobic oxidative decarboxylation of propionate groups of rings A and B of coproporphyrinogen-III to yield the vinyl groups in protoporphyrinogen-IX. This Xylella fastidiosa (strain 9a5c) protein is Oxygen-dependent coproporphyrinogen-III oxidase.